The sequence spans 381 residues: Cytochrome b (381 aa).

The next 4 helical transmembrane spans lie at 34-54 (FGSH…FLAM), 78-99 (WLIR…YLHI), 114-134 (WNIG…GYVL), and 179-199 (FFAF…IHLL). The heme b site is built by His84 and His98. 2 residues coordinate heme b: His183 and His197. His202 provides a ligand contact to a ubiquinone. Transmembrane regions (helical) follow at residues 227 to 247 (YKDL…ALFM), 289 to 309 (LGGV…PLLH), 321 to 341 (MTQI…WIGG), and 348 to 368 (FIMV…IIMP).

The protein belongs to the cytochrome b family. The cytochrome bc1 complex contains 3 respiratory subunits (MT-CYB, CYC1 and UQCRFS1), 2 core proteins (UQCRC1 and UQCRC2) and probably 6 low-molecular weight proteins. Heme b serves as cofactor.

The protein resides in the mitochondrion inner membrane. Its function is as follows. Component of the ubiquinol-cytochrome c reductase complex (complex III or cytochrome b-c1 complex) that is part of the mitochondrial respiratory chain. The b-c1 complex mediates electron transfer from ubiquinol to cytochrome c. Contributes to the generation of a proton gradient across the mitochondrial membrane that is then used for ATP synthesis. In Carcharhinus porosus (Smalltail shark), this protein is Cytochrome b (mt-cyb).